A 141-amino-acid polypeptide reads, in one-letter code: Proteasome maturation protein (141 aa).

Residue lysine 39 forms a Glycyl lysine isopeptide (Lys-Gly) (interchain with G-Cter in SUMO2) linkage. Positions 68 to 72 match the High-affinity association with the preproteasome motif; the sequence is RNIQG.

It belongs to the POMP/UMP1 family. As to quaternary structure, constituent of preproteasomes, but not of mature 20S proteasomes. Within the preproteasome, may directly interact with PSMB1/beta6, PSMB4/beta7, PSMB5/beta5, PSMB6/beta1 and PSMB9/beta1i. Interaction with PSMB8/beta5i has been observed in PubMed:10973495, but not in PubMed:10926487. Forms tetramers. As to expression, strongly expressed from the basal layer to the granular layer of healthy epidermis, whereas in KLICK patients there is a gradual decrease of expression toward the granular layer.

It is found in the cytoplasm. The protein localises to the cytosol. Its subcellular location is the nucleus. It localises to the microsome membrane. In terms of biological role, molecular chaperone essential for the assembly of standard proteasomes and immunoproteasomes. Degraded after completion of proteasome maturation. Mediates the association of 20S preproteasome with the endoplasmic reticulum. The sequence is that of Proteasome maturation protein from Homo sapiens (Human).